We begin with the raw amino-acid sequence, 333 residues long: Nuclear egress protein 1 (333 aa).

A disordered region spans residues 45 to 64 (SRRYKSVSRSGPSMRVRSRT). A CCCH-type zinc finger spans residues 128–251 (CLSLSGMGYH…YVIFPGKSVH (124 aa)).

It belongs to the herpesviridae NEC1 protein family. Forms a heterohexameric complex with NEC2. Interacts with capsid vertex specific component 2/CVC2; this interaction directs the capsid to the host inner nuclear membrane to initiate budding. In terms of processing, phosphorylated at serine residues in the N-terminus. This phosphorylation regulates the localization within the inner nuclear membrane.

Its subcellular location is the host nucleus inner membrane. Plays an essential role in virion nuclear egress, the first step of virion release from infected cell. Within the host nucleus, NEC1 interacts with the newly formed capsid through the vertexes and directs it to the inner nuclear membrane by associating with NEC2. Induces the budding of the capsid at the inner nuclear membrane as well as its envelopment into the perinuclear space. There, the NEC1/NEC2 complex promotes the fusion of the enveloped capsid with the outer nuclear membrane and the subsequent release of the viral capsid into the cytoplasm where it will reach the secondary budding sites in the host Golgi or trans-Golgi network. The sequence is that of Nuclear egress protein 1 from Varicella-zoster virus (strain Dumas) (HHV-3).